The primary structure comprises 178 residues: Neuroblastoma suppressor of tumorigenicity 1 (178 aa).

The signal sequence occupies residues 1–16 (MLWVLVGTVLPVMLLA). Cystine bridges form between C34–C84, C48–C98, C58–C117, C62–C119, and C81–C122. The region spanning 34–123 (CEAKNITQIV…IVHCSCQACG (90 aa)) is the CTCK domain. A disordered region spans residues 130-178 (GLNVYMQGEDGPGSQPGSHSHSHPHPGCQTPEPEEPPGAPQVEEEGAED).

It belongs to the DAN family. Homodimer. As to expression, most abundant in lung, brain, intestine and kidney.

It localises to the secreted. Functionally, possible candidate as a tumor suppressor gene of neuroblastoma. May play an important role in preventing cells from entering the final stage (G1/S) of the transformation process. This is Neuroblastoma suppressor of tumorigenicity 1 (Nbl1) from Rattus norvegicus (Rat).